The primary structure comprises 491 residues: Serine/threonine-protein kinase 3/4 (491 aa).

The tract at residues 1–24 is disordered; sequence MEEVQRRQHPHPRRSLKKLSEDSL. Basic residues predominate over residues 7–17; sequence RQHPHPRRSLK. In terms of domain architecture, Protein kinase spans 32 to 283; sequence FDVLEKLGEG…ATQLLQHPFI (252 aa). ATP contacts are provided by residues 38-46 and Lys-61; that span reads LGEGSYGSV. The active-site Proton acceptor is the Asp-151. Thr-185 is modified (phosphothreonine; by autocatalysis). The stretch at 292 to 334 forms a coiled coil; sequence LRDLITDMMEIKLKRQEEQQRDLDQDDEENSEEDDMDSGTMVR. Disordered regions lie at residues 307-394 and 406-435; these read QEEQ…IQQS and EKEN…PQDG. A compositionally biased stretch (acidic residues) spans 315–328; it reads DQDDEENSEEDDMD. 2 stretches are compositionally biased toward polar residues: residues 363-373 and 410-428; these read TLDSQMGTMVI and QANS…SSDN. The SARAH domain occupies 437-484; it reads FESLKSWSVEELQRRLASLDPTMEQEIEEIRQRYQAKRQPILDAIDAK. A coiled-coil region spans residues 442–475; the sequence is SWSVEELQRRLASLDPTMEQEIEEIRQRYQAKRQ.

It belongs to the protein kinase superfamily. STE Ser/Thr protein kinase family. STE20 subfamily. Homodimer; mediated via the coiled-coil region. It depends on Mg(2+) as a cofactor. Post-translationally, proteolytically cleaved by caspase-3 during apoptosis at Asp-328 resulting in a 37 kDa form. Proteolytic cleavage results in kinase activation and nuclear translocation of the truncated form (MST1/N).

It localises to the cytoplasm. The protein resides in the nucleus. It catalyses the reaction L-seryl-[protein] + ATP = O-phospho-L-seryl-[protein] + ADP + H(+). The enzyme catalyses L-threonyl-[protein] + ATP = O-phospho-L-threonyl-[protein] + ADP + H(+). Its activity is regulated as follows. Inhibited by the C-terminal non-catalytic region. Activated by caspase-cleavage. Full activation also requires homodimerization and autophosphorylation of Thr-185. Functionally, stress-activated, pro-apoptotic kinase which, following caspase-cleavage, enters the nucleus and induces chromatin condensation followed by internucleosomal DNA fragmentation. Key component of the Hippo signaling pathway which plays a pivotal role in organ size control and tumor suppression by restricting proliferation and promoting apoptosis. The core of this pathway is composed of a kinase cascade wherein stk3/mst2 and stk4/mst1, in complex with its regulatory protein sav1, phosphorylates and activates lats1/2 in complex with its regulatory protein mob1, which in turn phosphorylates and inactivates yap1 oncoprotein and wwtr1/taz. Phosphorylation of yap1 by lats2 inhibits its translocation into the nucleus to regulate cellular genes important for cell proliferation, cell death, and cell migration. Phosphorylates 'Ser-14' of histone H2B (H2BS14ph) during apoptosis. This is Serine/threonine-protein kinase 3/4 (STK4) from Squalus acanthias (Spiny dogfish).